The chain runs to 143 residues: Subtelomeric hrmA-associated cluster protein cgnA (143 aa).

G-Q-I/R/S repeat units lie at residues 11 to 13 (GQI), 14 to 16 (GPI), 17 to 19 (GQR), 20 to 22 (GQS), 23 to 25 (GQR), 26 to 28 (GQS), 29 to 31 (GQR), 32 to 34 (GQS), 35 to 37 (GQI), 38 to 40 (GQS), 41 to 43 (GQS), 44 to 46 (GQS), 47 to 49 (GQI), 50 to 52 (GQI), 53 to 55 (GQI), 56 to 58 (GQI), 59 to 61 (GQI), 62 to 64 (GQI), 65 to 67 (GQI), 68 to 70 (GQI), 71 to 73 (GQI), 74 to 76 (GQI), 77 to 79 (GQI), 80 to 82 (GQI), 83 to 85 (GQI), 86 to 88 (GQI), 89 to 91 (GQI), 92 to 94 (GQI), and 95 to 97 (GQA). A Collagen-like domain is found at 11 to 68 (GQIGPIGQRGQSGQRGQSGQRGQSGQIGQSGQSGQSGQIGQIGQIGQIGQIGQIGQIG). Residues 11 to 97 (GQIGPIGQRG…IGQIGQIGQA (87 aa)) are 29 X 3 AA approximate tandem repeats of G-Q-I/R/S. Positions 16-49 (IGQRGQSGQRGQSGQRGQSGQIGQSGQSGQSGQI) are disordered.

The protein localises to the secreted. Functionally, collagen-like protein; part of the subtelomeric hrmA-associated cluster (HAC) containing genes that alter the hyphal surface (such as reduced total chitin or increased beta-glucan exposure) and perturb inter-hyphal interactions within the developing biofilms, resulting in a loss of vertically aligned polarized growing filaments. Consequently, this hypoxia-typic morphotype (called H-MORPH) with altered biofilm architecture leads to increased hypoxia fitness, increased host inflammation, rapid disease progression, and mortality in a murine model of invasive aspergillosis. CgnA is directly involved in the reduction of total surface chitin and the increase of beta-glucan exposure, and mediates the detachment of the extracellular matrix and especially of its component galactosaminogalactan (GAG). The sequence is that of Subtelomeric hrmA-associated cluster protein cgnA from Aspergillus fumigatus (strain ATCC MYA-4609 / CBS 101355 / FGSC A1100 / Af293) (Neosartorya fumigata).